Consider the following 259-residue polypeptide: UPF0246 protein NMCC_0856 (259 aa).

The protein belongs to the UPF0246 family.

The sequence is that of UPF0246 protein NMCC_0856 from Neisseria meningitidis serogroup C (strain 053442).